The primary structure comprises 316 residues: Ribosomal RNA small subunit methyltransferase H (316 aa).

Residues 35–37 (AGH), Asp55, Phe84, Asp105, and Gln112 each bind S-adenosyl-L-methionine.

The protein belongs to the methyltransferase superfamily. RsmH family.

It is found in the cytoplasm. The enzyme catalyses cytidine(1402) in 16S rRNA + S-adenosyl-L-methionine = N(4)-methylcytidine(1402) in 16S rRNA + S-adenosyl-L-homocysteine + H(+). In terms of biological role, specifically methylates the N4 position of cytidine in position 1402 (C1402) of 16S rRNA. In Streptococcus gordonii (strain Challis / ATCC 35105 / BCRC 15272 / CH1 / DL1 / V288), this protein is Ribosomal RNA small subunit methyltransferase H.